A 141-amino-acid polypeptide reads, in one-letter code: VLNAGDKANVKAVWNKVAAHVEEYGAETLERMFTVYPQTKTYFPHFDLHHGSAQIRTHGKKVLTALGEAVNHIDDLASALSKLSDIHAQTLRVDPVNFKFLNHCFLVVVAIHQPSVLTPEVHVSLDKFLSAVGTVLTSKYR.

The Globin domain maps to 1–141; that stretch reads VLNAGDKANV…VGTVLTSKYR (141 aa). Residue histidine 58 coordinates O2. Histidine 87 contacts heme b.

Belongs to the globin family. As to quaternary structure, heterotetramer of two alpha chains and two beta chains. Red blood cells.

In terms of biological role, involved in oxygen transport from the lung to the various peripheral tissues. This Chrysemys picta bellii (Western painted turtle) protein is Hemoglobin subunit alpha-A (HBAA).